The chain runs to 172 residues: Keratin, high-sulfur matrix protein, B2A (172 aa).

The residue at position 2 (Ala-2) is an N-acetylalanine. 5 repeats span residues 27-36 (PTCCQTSCCQ), 37-46 (PTSIQTSCCQ), 47-56 (PISIQTSCCQ), 57-66 (PTSIQTSCCQ), and 67-76 (PTCLQTSGCE).

Functionally, the keratin products of mammalian epidermal derivatives such as wool and hair consist of microfibrils embedded in a rigid matrix of other proteins. The matrix proteins include the high-sulfur and high-tyrosine keratins, having molecular weights of 6-20 kDa, whereas the microfibrils contain the larger, low-sulfur keratins (40-56 kDa). The chain is Keratin, high-sulfur matrix protein, B2A from Ovis aries (Sheep).